We begin with the raw amino-acid sequence, 266 residues long: Undecaprenyl-diphosphatase (266 aa).

The next 8 membrane-spanning stretches (helical) occupy residues 1–21, 40–60, 90–110, 113–133, 145–165, 188–208, 217–237, and 245–265; these read MTLL…FLPV, LPLY…LVVL, LLVV…KPIF, LNQP…LWFT, LSWL…IPGI, FSFL…IDEV, PLLG…LWLF, and FKWF…KVAM.

It belongs to the UppP family.

It localises to the cell inner membrane. The catalysed reaction is di-trans,octa-cis-undecaprenyl diphosphate + H2O = di-trans,octa-cis-undecaprenyl phosphate + phosphate + H(+). In terms of biological role, catalyzes the dephosphorylation of undecaprenyl diphosphate (UPP). Confers resistance to bacitracin. This Acaryochloris marina (strain MBIC 11017) protein is Undecaprenyl-diphosphatase.